A 189-amino-acid polypeptide reads, in one-letter code: MAGYSTSEFKSGLKVMMDGDPYTIMENEFVKPGKGQAFNRVKLRNLKTGRVIDRTFKSGDSLEAADVIETQLQYLYSDGEFWHLMSPETYEQYSADAAAVGDSTKWLKEQDTCTVTLWNGAPLLVSPPNFVTLKVTETDPGIRGDTSGGGSKPATLETGAVVRVPLFIDVGEMLKIDTRTGEYVERAKE.

Lys-34 carries the N6-(3,6-diaminohexanoyl)-5-hydroxylysine modification.

Belongs to the elongation factor P family. May be beta-lysylated on the epsilon-amino group of Lys-34 by the combined action of EpmA and EpmB, and then hydroxylated on the C5 position of the same residue by EpmC (if this protein is present). Lysylation is critical for the stimulatory effect of EF-P on peptide-bond formation. The lysylation moiety may extend toward the peptidyltransferase center and stabilize the terminal 3-CCA end of the tRNA. Hydroxylation of the C5 position on Lys-34 may allow additional potential stabilizing hydrogen-bond interactions with the P-tRNA.

It is found in the cytoplasm. It participates in protein biosynthesis; polypeptide chain elongation. In terms of biological role, involved in peptide bond synthesis. Alleviates ribosome stalling that occurs when 3 or more consecutive Pro residues or the sequence PPG is present in a protein, possibly by augmenting the peptidyl transferase activity of the ribosome. Modification of Lys-34 is required for alleviation. This is Elongation factor P from Nitrosococcus oceani (strain ATCC 19707 / BCRC 17464 / JCM 30415 / NCIMB 11848 / C-107).